A 126-amino-acid polypeptide reads, in one-letter code: Aspartate 1-decarboxylase (126 aa).

Ser-25 serves as the catalytic Schiff-base intermediate with substrate; via pyruvic acid. Residue Ser-25 is modified to Pyruvic acid (Ser). Residue Thr-57 coordinates substrate. Residue Tyr-58 is the Proton donor of the active site. 73 to 75 (GGA) contributes to the substrate binding site.

It belongs to the PanD family. In terms of assembly, heterooctamer of four alpha and four beta subunits. The cofactor is pyruvate. Is synthesized initially as an inactive proenzyme, which is activated by self-cleavage at a specific serine bond to produce a beta-subunit with a hydroxyl group at its C-terminus and an alpha-subunit with a pyruvoyl group at its N-terminus.

Its subcellular location is the cytoplasm. The enzyme catalyses L-aspartate + H(+) = beta-alanine + CO2. Its pathway is cofactor biosynthesis; (R)-pantothenate biosynthesis; beta-alanine from L-aspartate: step 1/1. In terms of biological role, catalyzes the pyruvoyl-dependent decarboxylation of aspartate to produce beta-alanine. The chain is Aspartate 1-decarboxylase from Xylella fastidiosa (strain 9a5c).